The primary structure comprises 273 residues: MMIQGFKSSNQEFKFGPWQLTAIKTHIMKSADAEKLAEEMSMPCLPEMMFGDNVLRIQHTSGFGIEFNAKDALKVVKSNQASLKVACAEEWQESRSDSEHNKEVVKPYDWTYTTDYKGTLLGDNMKLNVIPTTDKINTEKLKAREQIMFFEEVLLFEDELHDHGVSSLSVKIRVMPTSFFLLLRYFLRVDGVLIRMNDTRLYHEADKTFMLREYTSKESKISNLSHVPPPLYTEPNEISQYLPVTQTIYEKLEFPSQDLEKAVLVDTKNVTAL.

This sequence belongs to the TIP41 family.

Its subcellular location is the cytoplasm. Its function is as follows. May be a regulator of serine/threonine-protein phosphatases 2A (PP2A) and 4 (PP4). The chain is TIP41-like protein (tiprl) from Xenopus tropicalis (Western clawed frog).